The primary structure comprises 114 residues: Putative membrane protein insertion efficiency factor (114 aa).

The protein belongs to the UPF0161 family.

Its subcellular location is the cell inner membrane. Could be involved in insertion of integral membrane proteins into the membrane. This is Putative membrane protein insertion efficiency factor from Nitrobacter hamburgensis (strain DSM 10229 / NCIMB 13809 / X14).